The sequence spans 168 residues: ATP synthase subunit b (168 aa).

Residues 9–29 form a helical membrane-spanning segment; it reads SIPFGTIAYTLFIFLLLLVML.

This sequence belongs to the ATPase B chain family. As to quaternary structure, F-type ATPases have 2 components, F(1) - the catalytic core - and F(0) - the membrane proton channel. F(1) has five subunits: alpha(3), beta(3), gamma(1), delta(1), epsilon(1). F(0) has three main subunits: a(1), b(2) and c(10-14). The alpha and beta chains form an alternating ring which encloses part of the gamma chain. F(1) is attached to F(0) by a central stalk formed by the gamma and epsilon chains, while a peripheral stalk is formed by the delta and b chains.

It localises to the cell membrane. F(1)F(0) ATP synthase produces ATP from ADP in the presence of a proton or sodium gradient. F-type ATPases consist of two structural domains, F(1) containing the extramembraneous catalytic core and F(0) containing the membrane proton channel, linked together by a central stalk and a peripheral stalk. During catalysis, ATP synthesis in the catalytic domain of F(1) is coupled via a rotary mechanism of the central stalk subunits to proton translocation. In terms of biological role, component of the F(0) channel, it forms part of the peripheral stalk, linking F(1) to F(0). This chain is ATP synthase subunit b, found in Bacillus mycoides (strain KBAB4) (Bacillus weihenstephanensis).